A 202-amino-acid chain; its full sequence is Transmembrane 4 L6 family member 1 (202 aa).

Topologically, residues 1-9 are cytoplasmic; the sequence is MCSSKCTRY. Residues 10–30 form a helical membrane-spanning segment; it reads IGHSLVVFAVLCIVANILLYF. Over 31-49 the chain is Extracellular; sequence PNGETKYAYEDHLSRFVWF. The helical transmembrane segment at 50 to 70 threads the bilayer; sequence FAGIVGGGLLILLPAFVFLGL. Over 71 to 93 the chain is Cytoplasmic; it reads EGEDCCGCWSCENYGKRCTMLSS. A helical transmembrane segment spans residues 94 to 114; the sequence is IMAALIGIAGSGYCVIVAALG. Residues 115 to 161 lie on the Extracellular side of the membrane; the sequence is LAEGPKCGDSHGMWNYTFANTDGQYLLDPTTWSKCHEPNNIVEWNVT. Residues N129 and N159 are each glycosylated (N-linked (GlcNAc...) asparagine). The chain crosses the membrane as a helical span at residues 162–182; it reads LFSILLALGGLEFILCLIQVI. At 183-202 the chain is on the cytoplasmic side; sequence NGVLEGMCSYCCSHQQQYDC.

It belongs to the L6 tetraspanin family. Present in high molecular weight complexes in tumor cells. Interacts with SDCBP2.

It is found in the membrane. This is Transmembrane 4 L6 family member 1 (TM4SF1) from Mesocricetus auratus (Golden hamster).